Consider the following 76-residue polypeptide: uncharacterized protein (76 aa).

Its subcellular location is the plastid. This is an uncharacterized protein from Euglena longa (Euglenophycean alga).